We begin with the raw amino-acid sequence, 194 residues long: Chorion class B protein ERB4 (194 aa).

A signal peptide spans 1-20 (MSSNVIVLCVSALFIQCAVS). Positions 22–72 (CVGRIGSLRGGPFDGWGYDGLGYDGFGIGGWNGRGCGGLGDDIAAAAALGA) are left arm. Positions 73 to 128 (SHGGTLAVVSTSAAPTGLGIASENVYEGSVGVCGNLPFLGTADVAGEFPTAGLGGI) are central domain. Residues 129-194 (DYTCGDGAVG…RGCGCGANYY (66 aa)) form a right arm (Gly-rich tandem repeats) region.

The protein belongs to the chorion protein family.

Its function is as follows. This protein is one of many from the eggshell of the silk moth. This is Chorion class B protein ERB4 from Bombyx mori (Silk moth).